The chain runs to 319 residues: tRNA uridine(34) hydroxylase (319 aa).

Residues 127-221 (KQEDTVIIDA…YGKDPEVQGE (95 aa)) form the Rhodanese domain. The Cysteine persulfide intermediate role is filled by Cys-181.

The protein belongs to the TrhO family.

It catalyses the reaction uridine(34) in tRNA + AH2 + O2 = 5-hydroxyuridine(34) in tRNA + A + H2O. Functionally, catalyzes oxygen-dependent 5-hydroxyuridine (ho5U) modification at position 34 in tRNAs. This is tRNA uridine(34) hydroxylase from Bacillus cereus (strain Q1).